Consider the following 83-residue polypeptide: Small ribosomal subunit protein eS21 (83 aa).

This sequence belongs to the eukaryotic ribosomal protein eS21 family. As to quaternary structure, component of the 40S small ribosomal subunit.

The protein resides in the cytoplasm. It localises to the cytosol. Its subcellular location is the rough endoplasmic reticulum. This chain is Small ribosomal subunit protein eS21 (RpS21), found in Ixodes scapularis (Black-legged tick).